We begin with the raw amino-acid sequence, 43 residues long: Thymosin beta-12 (43 aa).

2 stretches are compositionally biased toward basic and acidic residues: residues 1-25 and 33-43; these read MSDK…ETQE and ETIEQEKQATA. The segment at 1 to 43 is disordered; sequence MSDKPDLAEVSNFDKTKLKKTETQEKNPLPTKETIEQEKQATA. Ser2 bears the N-acetylserine mark.

This sequence belongs to the thymosin beta family.

Its subcellular location is the cytoplasm. It is found in the cytoskeleton. Its function is as follows. Plays an important role in the organization of the cytoskeleton. Binds to and sequesters actin monomers (G actin) and therefore inhibits actin polymerization. The protein is Thymosin beta-12 of Oncorhynchus mykiss (Rainbow trout).